Consider the following 356-residue polypeptide: Serendipity locus protein beta (356 aa).

A C2H2-type 1; degenerate zinc finger spans residues 171-193 (IPCHICGEMFSSQEVLERHIKAD). 5 C2H2-type zinc fingers span residues 201–223 (ATCN…MNLH), 229–251 (LECR…MEVH), 257–279 (YQCD…LMRH), 286–308 (LICE…LRTH), and 315–337 (YPCP…KRVH).

In terms of assembly, binds chromatin; requires N-terminal regions to form protein-protein contacts, in addition to DNA specific recognition by the zinc fingers.

It localises to the nucleus. Its function is as follows. Binds to the consensus DNA sequence 5'-YCAGAGATGCGCA-3'. The sequence is that of Serendipity locus protein beta (Sry-beta) from Drosophila melanogaster (Fruit fly).